The primary structure comprises 392 residues: Probable Ni/Fe-hydrogenase 2 b-type cytochrome subunit (392 aa).

The Periplasmic segment spans residues 1-11; the sequence is MSHDPQPLGGK. Residues 12–32 form a helical membrane-spanning segment; that stretch reads IISKPVMIFGPLIVICMLLIV. The Cytoplasmic segment spans residues 33–34; sequence KR. The chain crosses the membrane as a helical span at residues 35–55; that stretch reads LVFGLGSVSDLNGGFPWGVWI. Residues 56–58 lie on the Periplasmic side of the membrane; the sequence is AFD. A helical membrane pass occupies residues 59 to 79; it reads LLIGTGFACGGWALAWAVYVF. Over 80-90 the chain is Cytoplasmic; that stretch reads NRGQYHPLVRP. A helical membrane pass occupies residues 91–111; it reads ALLASLFGYSLGGLSITIDVG. Over 112–133 the chain is Periplasmic; that stretch reads RYWNLPYFYIPGHFNVNSVLFE. A helical membrane pass occupies residues 134–154; the sequence is TAVCMTIYIGVMALEFAPALF. Topologically, residues 155 to 168 are cytoplasmic; sequence ERLGWKVSLQRLNK. A helical transmembrane segment spans residues 169–189; it reads VMFFIIALGALLPTMHQSSMG. The Periplasmic segment spans residues 190–207; the sequence is SLMISAGYKVHPLWQSYE. The helical transmembrane segment at 208 to 228 threads the bilayer; it reads MLPLFSLLTAFIMGFSIVIFE. Over 229 to 249 the chain is Cytoplasmic; the sequence is GSLVQAGLRGNGPDEKSLFVK. A helical membrane pass occupies residues 250–270; the sequence is LTNTISVLLAIFIVLRFGELI. Residues 271–281 are Periplasmic-facing; the sequence is YRDKLSLAFAG. Residues 282 to 302 form a helical membrane-spanning segment; that stretch reads DFYSVMFWIEVLLMLFPLVVL. Residues 303–333 are Cytoplasmic-facing; that stretch reads RVAKLRNDSRMLFLSALSALLGCATWRLTYS. A helical transmembrane segment spans residues 334–354; sequence LVAFNPGGGYAYFPTWEELLI. S355 is a topological domain (periplasmic). Residues 356–376 form a helical membrane-spanning segment; the sequence is IGFVAIEICAYIVLIRLLPIL. At 377 to 392 the chain is on the cytoplasmic side; sequence PPLKQNDHNRHEASKA.

The protein belongs to the NrfD family.

The protein resides in the cell inner membrane. Probable b-type cytochrome. In Escherichia coli (strain K12), this protein is Probable Ni/Fe-hydrogenase 2 b-type cytochrome subunit (hybB).